We begin with the raw amino-acid sequence, 1174 residues long: Probable DNA-directed RNA polymerase I subunit RPA2 (1174 aa).

The segment covering 1-16 (MSFQTLERERTFKNPP) has biased composition (basic and acidic residues). Residues 1–23 (MSFQTLERERTFKNPPKDGTSFP) form a disordered region. The C4-type zinc-finger motif lies at 1089-1118 (CRDCGSIISIMSTISMNGVGSASEVRCRSC).

It belongs to the RNA polymerase beta chain family. In terms of assembly, component of the RNA polymerase I (Pol I) complex consisting of 14 subunits.

It is found in the nucleus. Its subcellular location is the nucleolus. It carries out the reaction RNA(n) + a ribonucleoside 5'-triphosphate = RNA(n+1) + diphosphate. DNA-dependent RNA polymerase catalyzes the transcription of DNA into RNA using the four ribonucleoside triphosphates as substrates. Second largest core component of RNA polymerase I which synthesizes ribosomal RNA precursors. Proposed to contribute to the polymerase catalytic activity and forms the polymerase active center together with the largest subunit. Pol I is composed of mobile elements and RPA2 is part of the core element with the central large cleft and probably a clamp element that moves to open and close the cleft. The sequence is that of Probable DNA-directed RNA polymerase I subunit RPA2 (rpa2) from Schizosaccharomyces pombe (strain 972 / ATCC 24843) (Fission yeast).